Here is a 126-residue protein sequence, read N- to C-terminus: MFS14 protein (126 aa).

The or 24, or 26 signal peptide spans 1 to 23 (MALEAATAPRALLAACLVLLVLG).

In terms of tissue distribution, enhanced expression in male flowers. Accumulates in the tapetum.

In Zea mays (Maize), this protein is MFS14 protein (MFS14).